The chain runs to 196 residues: uncharacterized protein (196 aa).

It to H.influenzae HI_0431.

This is an uncharacterized protein from Escherichia coli (strain K12).